The chain runs to 336 residues: UDP-3-O-acylglucosamine N-acyltransferase (336 aa).

Residue His233 is the Proton acceptor of the active site.

This sequence belongs to the transferase hexapeptide repeat family. LpxD subfamily. As to quaternary structure, homotrimer.

The enzyme catalyses a UDP-3-O-[(3R)-3-hydroxyacyl]-alpha-D-glucosamine + a (3R)-hydroxyacyl-[ACP] = a UDP-2-N,3-O-bis[(3R)-3-hydroxyacyl]-alpha-D-glucosamine + holo-[ACP] + H(+). It participates in bacterial outer membrane biogenesis; LPS lipid A biosynthesis. Its function is as follows. Catalyzes the N-acylation of UDP-3-O-acylglucosamine using 3-hydroxyacyl-ACP as the acyl donor. Is involved in the biosynthesis of lipid A, a phosphorylated glycolipid that anchors the lipopolysaccharide to the outer membrane of the cell. This chain is UDP-3-O-acylglucosamine N-acyltransferase, found in Helicobacter pylori (strain ATCC 700392 / 26695) (Campylobacter pylori).